The sequence spans 303 residues: Aspartate carbamoyltransferase catalytic subunit (303 aa).

Arg-49 and Thr-50 together coordinate carbamoyl phosphate. Lys-77 provides a ligand contact to L-aspartate. Residues Arg-99, His-126, and Gln-129 each coordinate carbamoyl phosphate. Residues Arg-159 and Arg-211 each contribute to the L-aspartate site. Carbamoyl phosphate contacts are provided by Ser-252 and Pro-253.

This sequence belongs to the aspartate/ornithine carbamoyltransferase superfamily. ATCase family. As to quaternary structure, heterododecamer (2C3:3R2) of six catalytic PyrB chains organized as two trimers (C3), and six regulatory PyrI chains organized as three dimers (R2).

The enzyme catalyses carbamoyl phosphate + L-aspartate = N-carbamoyl-L-aspartate + phosphate + H(+). It functions in the pathway pyrimidine metabolism; UMP biosynthesis via de novo pathway; (S)-dihydroorotate from bicarbonate: step 2/3. In terms of biological role, catalyzes the condensation of carbamoyl phosphate and aspartate to form carbamoyl aspartate and inorganic phosphate, the committed step in the de novo pyrimidine nucleotide biosynthesis pathway. The protein is Aspartate carbamoyltransferase catalytic subunit of Listeria monocytogenes serotype 4b (strain F2365).